Here is a 31-residue protein sequence, read N- to C-terminus: Cyclotide psybry C (31 aa).

The cyclopeptide (Gly-Asn) cross-link spans 1-31; that stretch reads GFNPCGETCQIDQTCHAPGCTCSIANICVRN. Intrachain disulfides connect cysteine 5–cysteine 20, cysteine 9–cysteine 22, and cysteine 15–cysteine 28.

In terms of processing, this is a cyclic peptide.

In terms of biological role, probably participates in a plant defense mechanism. The sequence is that of Cyclotide psybry C from Psychotria brachyceras.